We begin with the raw amino-acid sequence, 314 residues long: Putative 4-hydroxy-2-oxoglutarate aldolase, mitochondrial (314 aa).

50–51 is a binding site for substrate; sequence TN. Lysine 171 acts as the Schiff-base intermediate with substrate in catalysis.

Belongs to the DapA family.

It catalyses the reaction (4S)-4-hydroxy-2-oxoglutarate = glyoxylate + pyruvate. It carries out the reaction (4R)-4-hydroxy-2-oxoglutarate = glyoxylate + pyruvate. May catalyze the final step in the metabolic pathway of hydroxyproline. The protein is Putative 4-hydroxy-2-oxoglutarate aldolase, mitochondrial of Coccidioides immitis (strain RS) (Valley fever fungus).